The following is a 171-amino-acid chain: Large ribosomal subunit protein uL10 (171 aa).

The protein belongs to the universal ribosomal protein uL10 family. As to quaternary structure, part of the ribosomal stalk of the 50S ribosomal subunit. The N-terminus interacts with L11 and the large rRNA to form the base of the stalk. The C-terminus forms an elongated spine to which L12 dimers bind in a sequential fashion forming a multimeric L10(L12)X complex.

Its function is as follows. Forms part of the ribosomal stalk, playing a central role in the interaction of the ribosome with GTP-bound translation factors. This chain is Large ribosomal subunit protein uL10, found in Corynebacterium glutamicum (strain R).